The chain runs to 89 residues: Small ribosomal subunit protein uS14A (89 aa).

This sequence belongs to the universal ribosomal protein uS14 family. As to quaternary structure, contacts proteins S3 and S10. Part of the 30S ribosomal subunit.

Its function is as follows. Binds 16S rRNA, required for the assembly of 30S particles and may also be responsible for determining the conformation of the 16S rRNA at the A site. Non-essential protein. A second form of uS14, it can integrate into the 30S subunit where it partially compensates for loss of the major uS14 protein (AC P12878) in restoring 70S formation, although it does not seem to be incorporated into the ribosome as well as the major uS14. This is Small ribosomal subunit protein uS14A from Bacillus subtilis (strain 168).